The chain runs to 335 residues: Methionine import ATP-binding protein MetN (335 aa).

Residues 2 to 241 (IQFKDSYKHY…PQHPTTRSFV (240 aa)) form the ABC transporter domain. 38-45 (GHSGAGKS) contributes to the ATP binding site.

The protein belongs to the ABC transporter superfamily. Methionine importer (TC 3.A.1.24) family. As to quaternary structure, the complex is composed of two ATP-binding proteins (MetN), two transmembrane proteins (MetI) and a solute-binding protein (MetQ).

It localises to the cell inner membrane. It catalyses the reaction L-methionine(out) + ATP + H2O = L-methionine(in) + ADP + phosphate + H(+). It carries out the reaction D-methionine(out) + ATP + H2O = D-methionine(in) + ADP + phosphate + H(+). Functionally, part of the ABC transporter complex MetNIQ involved in methionine import. Responsible for energy coupling to the transport system. This Xylella fastidiosa (strain Temecula1 / ATCC 700964) protein is Methionine import ATP-binding protein MetN.